Here is a 212-residue protein sequence, read N- to C-terminus: Putative aryl-alcohol dehydrogenase AAD6 (212 aa).

Y76 serves as the catalytic Proton donor.

Belongs to the aldo/keto reductase family. Aldo/keto reductase 2 subfamily.

The sequence is that of Putative aryl-alcohol dehydrogenase AAD6 from Saccharomyces cerevisiae (strain ATCC 204508 / S288c) (Baker's yeast).